The chain runs to 538 residues: MWSGRSSFTSLVVGVFVVYVVHTCWVMYGIVYTRPCSGDANCIQPYLARRPKLQLSVYTTTRSHLGAENNIDLVLNVEDFDVESKFERTVNVSVPKKTRNNGTLYAYIFLHHAGVLPWHDGKQVHLVSPLTTYMVPKPEEINLLTGESDTQQIEAEKKPTSALDEPVSHWRPRLALNVMADNFVFDGSSLPADVHRYMKMIQLGKTVHYLPILFIDQLSNRVKDLMVINRSTTELPLTVSYDKVSLGRLRFWIHMQDAVYSLQQFGFSEKDADEVKGIFVDTNLYFLALTFFVAAFHLLFDFLAFKNDISFWKKKKSMIGMSTKAVLWRCFSTVVIFLFLLDEQTSLLVLVPAGVGAAIELWKVKKALKMTIFWRGLMPEFQFGTYSESERKTEEYDTQAMKYLSYLLYPLCVGGAVYSLLNIKYKSWYSWLINSFVNGVYAFGFLFMLPQLFVNYKLKSVAHLPWKAFTYKAFNTFIDDVFAFIITMPTSHRLACFRDDVVFLVYLYQRWLYPVDKRRVNEFGESYEEKATRAPHTD.

Residues 1-10 lie on the Cytoplasmic side of the membrane; sequence MWSGRSSFTS. Residues 11–31 form a helical membrane-spanning segment; that stretch reads LVVGVFVVYVVHTCWVMYGIV. The Extracellular segment spans residues 32–284; it reads YTRPCSGDAN…VKGIFVDTNL (253 aa). N-linked (GlcNAc...) asparagine glycans are attached at residues N91, N101, and N229. Residues 285–305 form a helical membrane-spanning segment; that stretch reads YFLALTFFVAAFHLLFDFLAF. Over 306-324 the chain is Cytoplasmic; the sequence is KNDISFWKKKKSMIGMSTK. A helical transmembrane segment spans residues 325–342; that stretch reads AVLWRCFSTVVIFLFLLD. The Extracellular portion of the chain corresponds to 343–346; sequence EQTS. Residues 347 to 364 traverse the membrane as a helical segment; sequence LLVLVPAGVGAAIELWKV. The Cytoplasmic segment spans residues 365 to 402; it reads KKALKMTIFWRGLMPEFQFGTYSESERKTEEYDTQAMK. Residues 403 to 423 form a helical membrane-spanning segment; it reads YLSYLLYPLCVGGAVYSLLNI. Residues 424 to 428 lie on the Extracellular side of the membrane; sequence KYKSW. A helical membrane pass occupies residues 429–449; the sequence is YSWLINSFVNGVYAFGFLFML. At 450-538 the chain is on the cytoplasmic side; that stretch reads PQLFVNYKLK…EKATRAPHTD (89 aa).

The protein belongs to the CLPTM1 family. As to expression, ubiquitously expressed.

Its subcellular location is the endoplasmic reticulum membrane. The enzyme catalyses a 6-(alpha-D-glucosaminyl)-1-(1,2-diacyl-sn-glycero-3-phospho)-1D-myo-inositol(in) = a 6-(alpha-D-glucosaminyl)-1-(1,2-diacyl-sn-glycero-3-phospho)-1D-myo-inositol(out). It catalyses the reaction 6-(alpha-D-glucosaminyl)-(1-octadecanoyl,2-(9Z)-octadecenoyl-sn-glycero-3-phospho)-1D-myo-inositol(in) = 6-(alpha-D-glucosaminyl)-(1-octadecanoyl,2-(9Z)-octadecenoyl-sn-glycero-3-phospho)-1D-myo-inositol(out). The catalysed reaction is a 1,2-diacyl-sn-glycero-3-phospho-(1D-myo-inositol)(in) = a 1,2-diacyl-sn-glycero-3-phospho-(1D-myo-inositol)(out). It carries out the reaction a 1,2-diacyl-sn-glycero-3-phosphocholine(in) = a 1,2-diacyl-sn-glycero-3-phosphocholine(out). The enzyme catalyses a 1,2-diacyl-sn-glycero-3-phosphoethanolamine(in) = a 1,2-diacyl-sn-glycero-3-phosphoethanolamine(out). Scramblase that mediates the translocation of glucosaminylphosphatidylinositol (alpha-D-GlcN-(1-6)-(1,2-diacyl-sn-glycero-3-phospho)-1D-myo-inositol, GlcN-PI) across the endoplasmic reticulum (ER) membrane, from the cytosolic leaflet to the luminal leaflet of the ER membrane, where it participates in the biosynthesis of glycosylphosphatidylinositol (GPI). GPI is a lipid glycoconjugate involved in post-translational modification of proteins. Can also translocate 1,2-diacyl-sn-glycero-3-phospho-(1D-myo-inositol) (phosphatidylinositol or PI), as well as several other phospholipids (1,2-diacyl-sn-glycero-3-phosphocholine, 1,2-diacyl-sn-glycero-3-phosphoethanolamine), and N-acetylglucosaminylphosphatidylinositol (GlcNAc-PI) in vitro. The protein is Lipid scramblase CLPTM1L (CLPTM1L) of Homo sapiens (Human).